An 808-amino-acid chain; its full sequence is N-terminal kinase-like protein (808 aa).

The Protein kinase domain occupies 14 to 314; that stretch reads FELIPEPPEG…PEDFCRHKVL (301 aa). 3 HEAT repeats span residues 350–388, 389–427, and 507–545; these read IIPVVVKMFSSTDRAMRIRLLQQMEQFIQYLDEPTVNTQ, IFPHVVHGFLDTNPAIREQTVKSMLLLAPKLNEANLNVE, and ILPVLCGLTVDPEKSVRDQAFKAIRSFLSKLESVSEDPT. Disordered stretches follow at residues 540-566, 587-646, and 658-808; these read VSEDPTQLEEVEKDVHAASSPGMGGAA, SHPT…RWDD, and SVLA…RKLD. The span at 556–566 shows a compositional bias: low complexity; the sequence is AASSPGMGGAA. Residues 587–600 show a composition bias toward polar residues; it reads SHPTTAPTETNIPQ. The span at 601-617 shows a compositional bias: pro residues; it reads RPTPEGVPAPAPTPVPA. Positions 660–680 are enriched in polar residues; that stretch reads LAQQDDWSTGGQVSRASQVSN. Basic and acidic residues predominate over residues 681–690; sequence SDHKSSKSPE. At serine 754 the chain carries Phosphoserine. Residues 755–764 are compositionally biased toward acidic residues; sequence WGEDNWEGLE. Positions 761–797 form a coiled coil; the sequence is EGLETDSRQVKAELARKKREERRREMEAKRAERKVAK. Composition is skewed to basic and acidic residues over residues 765–775 and 782–795; these read TDSRQVKAELA and RRREMEAKRAERKV. The interval 793-808 is interaction with COPB1; it reads RKVAKGPMKLGARKLD.

It belongs to the protein kinase superfamily. Interacts with GORAB. Interacts with COPA, COPB1 and COPB2. Homooligomer. Interacts with AP2B1. As to expression, ubiquitous.

It is found in the cytoplasm. The protein resides in the cytoskeleton. It localises to the microtubule organizing center. The protein localises to the centrosome. Its subcellular location is the endoplasmic reticulum-Golgi intermediate compartment. It is found in the golgi apparatus. The protein resides in the cis-Golgi network. It localises to the nucleus. In terms of biological role, regulates COPI-mediated retrograde protein traffic at the interface between the Golgi apparatus and the endoplasmic reticulum. Involved in the maintenance of the Golgi apparatus morphology. Functionally, acts as a transcriptional activator. It binds to three different types of GC-rich DNA binding sites (box-A, -B and -C) in the beta-polymerase promoter region. It also binds to the TERT promoter region. The polypeptide is N-terminal kinase-like protein (SCYL1) (Homo sapiens (Human)).